Here is a 143-residue protein sequence, read N- to C-terminus: Putative transcriptional regulatory protein PH0763 (143 aa).

The protein belongs to the Tfx family.

In terms of biological role, putative transcriptional regulator. This chain is Putative transcriptional regulatory protein PH0763, found in Pyrococcus horikoshii (strain ATCC 700860 / DSM 12428 / JCM 9974 / NBRC 100139 / OT-3).